The primary structure comprises 555 residues: Putative polyketide hydroxylase (555 aa).

FAD-binding positions include 16–45 (PVLVVGGSLVGLSTSVFLGRLGVRHMLVER) and 303–313 (YRAGRVFLAGD). The tract at residues 366–395 (ATTARAAARSAEHSHPGFAPPPGTSGGPQG) is disordered.

This sequence belongs to the PheA/TfdB FAD monooxygenase family. FAD is required as a cofactor.

Involved in developmentally regulated synthesis of a compound biosynthetically related to polyketide antibiotics which is essential for spore color in Streptomyces halstedii. The polypeptide is Putative polyketide hydroxylase (schC) (Streptomyces halstedii).